The primary structure comprises 300 residues: Putative hydro-lyase Dshi_3152 (300 aa).

Belongs to the D-glutamate cyclase family.

In Dinoroseobacter shibae (strain DSM 16493 / NCIMB 14021 / DFL 12), this protein is Putative hydro-lyase Dshi_3152.